Consider the following 50-residue polypeptide: Thrombin-like enzyme BpirSP41 (50 aa).

The Peptidase S1 domain occupies 1–50 (VVGGDECDINEHPFLAFLYSHGYFCGLTLINQEWVLTAAHCDRRFMRIYL). Cys25 and Cys41 are disulfide-bonded. Residue His40 is the Charge relay system of the active site.

It belongs to the peptidase S1 family. Snake venom subfamily. In terms of assembly, monomer. N-glycosylated. As to expression, expressed by the venom gland.

It localises to the secreted. Inhibited by serine protease inhibitors PMSF, benzamidine, leupeptin and aprotinin, as well as by copper ions (Cu2+). Not inhibited by metalloprotease inhibitors EDTA, EGTA and 1,10-phenanthroline, as well as by barium (Ba2+) and calcium ion (Ca2+). Snake venom serine protease that interferes with the hemostatic system of the prey. It almost completely degrades both Aalpha (FGA) and Bbeta (FGB) chains of fibrinogen. It presents a higher ability to degrade fibrin clots than BpirSP27. It hydrolyzes chromogenic substrates S-2238 (used for testing thrombin activity), S-2222 (factor Xa), S-2266 (glandular kallikrein and factor XIa), and S-2302 (plasma kallikrein, factor XIa and XIIa). It shows a decrease in the clotting time of human plasma in the presence of increasing doses of the enzyme. Its minimum coagulant dose (MCD) is 20 ug. It promotes platelet aggregation with a maximum of aggregation of 20%, regardless of the concentration increase or the presence of calcium. It also shows 40% inhibition of the hemolytic activity promoted by the complement pathways and possess only a minor role in the induction of edema and pain in rat. The polypeptide is Thrombin-like enzyme BpirSP41 (Bothrops pirajai (Piraja's lancehead)).